A 360-amino-acid polypeptide reads, in one-letter code: MKLLTFPGQGTSISISILKAIIRNKSREFQTILSQNGKESNDLLQYIFQNPSSPGSIAVCSNLFYQLYQILSNPSDPQDQAPKNMTKIDSPDKKDNEQCYLLGHSLGELTCLSVNSLFSLKDLFDIANFRNKLMVTSTEKYLVAHNINRSNKFEMWALSSPRATDLPQEVQKLLNSPNLLSSSQNTISVANANSVKQCVVTGLVDDLESLRTELNLRFPRLRITELTNPYNIPFHNSTVLRPVQEPLYDYIWDILKKNGTHTLMELNHPIIANLDGNISYYIHHALDRFVKCSSRTVQFTMCYDTINSGTPVEIDKSICFGPGNVIYNLIRRNCPQVDTIEYTSLATIDAYHKAAEENKD.

The transit peptide at M1 to N24 directs the protein to the mitochondrion. Catalysis depends on residues S105 and H235.

It belongs to the FabD family.

It localises to the mitochondrion. The enzyme catalyses holo-[ACP] + malonyl-CoA = malonyl-[ACP] + CoA. It participates in lipid metabolism; fatty acid biosynthesis. In terms of biological role, involved in biosynthesis of fatty acids in mitochondria. The chain is Malonyl CoA-acyl carrier protein transacylase, mitochondrial (MCT1) from Saccharomyces cerevisiae (strain ATCC 204508 / S288c) (Baker's yeast).